The sequence spans 451 residues: L-seryl-tRNA(Sec) selenium transferase (451 aa).

An N6-(pyridoxal phosphate)lysine modification is found at lysine 286.

This sequence belongs to the SelA family. The cofactor is pyridoxal 5'-phosphate.

The protein resides in the cytoplasm. The enzyme catalyses L-seryl-tRNA(Sec) + selenophosphate + H(+) = L-selenocysteinyl-tRNA(Sec) + phosphate. It functions in the pathway aminoacyl-tRNA biosynthesis; selenocysteinyl-tRNA(Sec) biosynthesis; selenocysteinyl-tRNA(Sec) from L-seryl-tRNA(Sec) (bacterial route): step 1/1. Functionally, converts seryl-tRNA(Sec) to selenocysteinyl-tRNA(Sec) required for selenoprotein biosynthesis. The protein is L-seryl-tRNA(Sec) selenium transferase of Aliarcobacter butzleri (strain RM4018) (Arcobacter butzleri).